The following is a 262-amino-acid chain: Steroid 5-alpha-reductase DET2 (262 aa).

Transmembrane regions (helical) follow at residues 13 to 33, 51 to 71, 79 to 99, 113 to 133, 148 to 168, and 205 to 225; these read CLLTLIFAGPPTAVLLKFLQA, IAWFVMESPTLWLTLLLFPFG, SLLLFSPYLIHYFHRTIIYPL, FPITIAALAFTFNLLNGYIQA, WFWWRFVIGMVVFITGMYINI, and AIEWLGWAVMTWSWAGIGFFL.

It belongs to the steroid 5-alpha reductase family.

It localises to the membrane. It catalyses the reaction a 3-oxo-5alpha-steroid + NADP(+) = a 3-oxo-Delta(4)-steroid + NADPH + H(+). The catalysed reaction is 5alpha-campestan-3-one + NADP(+) = campest-4-en-3-one + NADPH + H(+). The enzyme catalyses (22S,24R)-22-hydroxy-5alpha-ergostan-3-one + NADP(+) = (22S)-22-hydroxycampest-4-en-3-one + NADPH + H(+). It carries out the reaction 3-dehydro-6-deoxoteasterone + NADP(+) = (22R,23R)-22,23-dihydroxycampest-4-en-3-one + NADPH + H(+). It participates in plant hormone biosynthesis; brassinosteroid biosynthesis. With respect to regulation, inhibited by the 4-azasteroids 4-MA. In terms of biological role, involved in a reduction step in the biosynthesis of the plant steroid, brassinolide (BL); acts at the second step in brassinolide biosynthesis in the 5alpha-reduction of (24R)- 24-methylcholest-4-en-3-one, which is further modified to form campestanol. Can use progesterone, testosterone, androstenedione and campestenone as substrate. Also catalyzes the conversion of campest-4-en-3-one (campesta-4-en-3-one, 4-en-3-one) to campest-3-one (campesta-3-one, 3-one), of (22S,24R)-22-hydroxyergost-4-en-3-one (22-hydroxy-campesta-4-en-3-one, 22-OH-4-en-3-one) to (22S,24R)-22-hydroxy-5alpha-ergostan-3-one (22-hydroxy-campesta-3-one, 22-OH-3-one), and of (22R,23R)-22,23-dihydroxy-5alpha-campestan-3-one (22,23,diOH-4-en-3-one) to (22R,23R)-22,23-dihydroxycampest-4-en-3-one (6-deoxo3DT). Required for the brassinosteroid- (BR) dependent regulation of seed size and shape as well as embryo development. The chain is Steroid 5-alpha-reductase DET2 from Arabidopsis thaliana (Mouse-ear cress).